A 275-amino-acid chain; its full sequence is MKTGMFTCGHQRLPIEHAFRDASELGYDGIEIWGGRPHAFAPDLKAGGIKQIKALAQTYQMPIIGYTPETNGYPYNMMLGDEHMRRESLDMIKLAMDMAKEMNAGYTLISAAHAGYLTPPNVIWGRLAENLSELCEYAENIGMDLILEPLTPYESNVVCNANDVLHALALVPSPRLFSMVDICAPYVQAEPVMSYFDKLGDKLRHLHIVDSDGASDTHYIPGEGKMPLRELMRDIIDRGYEGYCTVELVTMYMNEPRLYARQALERFRALLPEDE.

Glu-148 acts as the Proton donor/acceptor in catalysis. Residues Glu-148, Asp-181, His-207, and Glu-247 each coordinate a divalent metal cation. Glu-247 functions as the Proton donor/acceptor in the catalytic mechanism.

Belongs to the FrlC family. In terms of assembly, homooctamer. It depends on Ni(2+) as a cofactor. Requires Co(2+) as cofactor.

The enzyme catalyses N(6)-(D-psicosyl)-L-lysine = N(6)-(D-fructosyl)-L-lysine. Catalyzes the reversible interconversion of fructoselysine with its C-3 epimer, psicoselysine. Allows E.coli to utilize psicoselysine for growth. Does not act on psicose or fructoselysine 6-phosphate. The protein is Fructoselysine 3-epimerase (frlC) of Escherichia coli O157:H7.